Here is a 292-residue protein sequence, read N- to C-terminus: Bifunctional protein FolD 2 (292 aa).

NADP(+) contacts are provided by residues Gly166–Ser168 and Ile232.

Belongs to the tetrahydrofolate dehydrogenase/cyclohydrolase family. Homodimer.

The catalysed reaction is (6R)-5,10-methylene-5,6,7,8-tetrahydrofolate + NADP(+) = (6R)-5,10-methenyltetrahydrofolate + NADPH. It carries out the reaction (6R)-5,10-methenyltetrahydrofolate + H2O = (6R)-10-formyltetrahydrofolate + H(+). The protein operates within one-carbon metabolism; tetrahydrofolate interconversion. Catalyzes the oxidation of 5,10-methylenetetrahydrofolate to 5,10-methenyltetrahydrofolate and then the hydrolysis of 5,10-methenyltetrahydrofolate to 10-formyltetrahydrofolate. In Ruegeria pomeroyi (strain ATCC 700808 / DSM 15171 / DSS-3) (Silicibacter pomeroyi), this protein is Bifunctional protein FolD 2.